The following is a 109-amino-acid chain: T cell receptor alpha variable 26-1 (109 aa).

The N-terminal stretch at 1–19 (MRLVARVTVFLTFGTIIDA) is a signal peptide. In terms of domain architecture, Ig-like spans 20–109 (KTTQPTSMDC…TAVYYCIVRV (90 aa)). A disulfide bond links C39 and C105. N-linked (GlcNAc...) asparagine glycans are attached at residues N40 and N71.

As to quaternary structure, alpha-beta TR is a heterodimer composed of an alpha and beta chain; disulfide-linked. The alpha-beta TR is associated with the transmembrane signaling CD3 coreceptor proteins to form the TR-CD3 (TcR or TCR). The assembly of alpha-beta TR heterodimers with CD3 occurs in the endoplasmic reticulum where a single alpha-beta TR heterodimer associates with one CD3D-CD3E heterodimer, one CD3G-CD3E heterodimer and one CD247 homodimer forming a stable octameric structure. CD3D-CD3E and CD3G-CD3E heterodimers preferentially associate with TR alpha and TR beta chains, respectively. The association of the CD247 homodimer is the last step of TcR assembly in the endoplasmic reticulum and is required for transport to the cell surface.

Its subcellular location is the cell membrane. Its function is as follows. V region of the variable domain of T cell receptor (TR) alpha chain that participates in the antigen recognition. Alpha-beta T cell receptors are antigen specific receptors which are essential to the immune response and are present on the cell surface of T lymphocytes. Recognize peptide-major histocompatibility (MH) (pMH) complexes that are displayed by antigen presenting cells (APC), a prerequisite for efficient T cell adaptive immunity against pathogens. Binding of alpha-beta TR to pMH complex initiates TR-CD3 clustering on the cell surface and intracellular activation of LCK that phosphorylates the ITAM motifs of CD3G, CD3D, CD3E and CD247 enabling the recruitment of ZAP70. In turn ZAP70 phosphorylates LAT, which recruits numerous signaling molecules to form the LAT signalosome. The LAT signalosome propagates signal branching to three major signaling pathways, the calcium, the mitogen-activated protein kinase (MAPK) kinase and the nuclear factor NF-kappa-B (NF-kB) pathways, leading to the mobilization of transcription factors that are critical for gene expression and essential for T cell growth and differentiation. The T cell repertoire is generated in the thymus, by V-(D)-J rearrangement. This repertoire is then shaped by intrathymic selection events to generate a peripheral T cell pool of self-MH restricted, non-autoaggressive T cells. Post-thymic interaction of alpha-beta TR with the pMH complexes shapes TR structural and functional avidity. This chain is T cell receptor alpha variable 26-1, found in Homo sapiens (Human).